Consider the following 471-residue polypeptide: Proton-coupled amino acid transporter-like protein pathetic (471 aa).

The N-linked (GlcNAc...) asparagine glycan is linked to N61. Transmembrane regions (helical) follow at residues 81–101, 153–173, 187–207, 216–236, 253–273, 283–303, 337–357, 375–395, 397–417, and 432–452; these read FAFMCSGLIMGIFSTIFTAFI, ILFGLFLTYFGTCSVYTVIVA, AVSLRMLICIMLVPLILIAWV, VSMVANVFMGLGLGITFYYLV, LPQFFSITIFAMEAIGVVMPL, FLGICGVLSQGMSGVTLIYML, LISLAVYCTFGLQFFVCLEII, VLRTVLVTAAVVLAVAVPTIG, FMGLIGAFCFSILGLIFPVVI, and WILWKNAIITLCGIGALVFGT.

This sequence belongs to the amino acid/polyamine transporter 2 family. As to expression, in third instar larvae, expressed at highest levels in the brain and digestive system with particularly high levels in surface glia of the brain (at protein level). In third instar larvae, expressed in all cells of the body wall (at protein level). Within the body wall of third instar larvae, most highly expressed in epithelial cells and sensory neurons. Expressed at a similar level in all da neurons (at protein level). Widely expressed during embryonic and late larval stages. Levels are highly dynamic in embryogenesis with surges of expression in many structures, including muscle primordia, salivary glands, proventriculus, trachea and gonads. Expressed in all or most cells of larval imaginal disks. Expression is also particularly strong in the pouch and hinge regions of the wing disk and in the morphogenetic furrow of the eye disk.

It is found in the cell membrane. The protein resides in the lysosome membrane. The protein localises to the late endosome membrane. Its subcellular location is the cell projection. It localises to the axon. It is found in the dendrite. The protein resides in the perikaryon. The protein localises to the cytoplasm. In terms of biological role, amino acid transporter which has pH-dependent electrogenic transport activity for alanine and glycine but not for proline. Plays a role in positive regulation of growth by directly or indirectly modulating the effects of the TOR signaling pathway. Required in a cell-autonomous manner for dendrite growth in neurons with large dendrite arbors. This Drosophila melanogaster (Fruit fly) protein is Proton-coupled amino acid transporter-like protein pathetic.